The following is a 611-amino-acid chain: Dolabella-3,7-dien-18-ol synthase TPS06 (611 aa).

Mg(2+) contacts are provided by Asp363, Asp367, Asp507, Thr511, and Glu515. Residues 363–367 (DNTFD) carry the DDXXD motif; degenerate motif.

Belongs to the terpene synthase family. Tpsa subfamily. Mg(2+) serves as cofactor. It depends on Mn(2+) as a cofactor. Predominantly expressed in flowers but also in stems, siliques, roots and leaves.

The protein resides in the cytoplasm. The catalysed reaction is (2E,6E,10E)-geranylgeranyl diphosphate + H2O = (3E,7E)-dolabella-3,7-dien-18-ol + diphosphate. It participates in secondary metabolite biosynthesis; terpenoid biosynthesis. Functionally, involved in terpene biosynthesis in roots. Possesses sesquiterpene (C15) synthase activity and diterpene (C20) synthase activity in vitro. Possesses dolabella-3,7-dien-18-ol synthase activity in vitro. Catalyzes the formation of dolabella-3,7-dien-18-ol from geranylgeranyl diphosphate. The sequence is that of Dolabella-3,7-dien-18-ol synthase TPS06 from Arabidopsis thaliana (Mouse-ear cress).